The following is a 62-amino-acid chain: Large ribosomal subunit protein eL24 (62 aa).

Residues Cys-6, Cys-9, Cys-32, and Cys-36 each contribute to the Zn(2+) site. A C4-type zinc finger spans residues 6 to 36 (CSFCGELLEPGTGLLFAKRDGSTYYFCSSKC).

Belongs to the eukaryotic ribosomal protein eL24 family. In terms of assembly, part of the 50S ribosomal subunit. Forms a cluster with proteins L3 and L14. The cofactor is Zn(2+).

Its function is as follows. Binds to the 23S rRNA. The protein is Large ribosomal subunit protein eL24 of Methanococcoides burtonii (strain DSM 6242 / NBRC 107633 / OCM 468 / ACE-M).